The primary structure comprises 324 residues: tRNA-cytidine(32) 2-sulfurtransferase (324 aa).

A disordered region spans residues 1–26 (MQDLIDSPTAARTPAEEKIRHEGNKL). Over residues 14 to 26 (PAEEKIRHEGNKL) the composition is skewed to basic and acidic residues. The short motif at 55-60 (SGGKDS) is the PP-loop motif element. Residues cysteine 130, cysteine 133, and cysteine 221 each coordinate [4Fe-4S] cluster. The tract at residues 278–310 (RPDANGDTAFDPIDPEDPREDAGDACASSPADG) is disordered.

This sequence belongs to the TtcA family. Homodimer. It depends on Mg(2+) as a cofactor. [4Fe-4S] cluster is required as a cofactor.

The protein resides in the cytoplasm. The catalysed reaction is cytidine(32) in tRNA + S-sulfanyl-L-cysteinyl-[cysteine desulfurase] + AH2 + ATP = 2-thiocytidine(32) in tRNA + L-cysteinyl-[cysteine desulfurase] + A + AMP + diphosphate + H(+). Its pathway is tRNA modification. In terms of biological role, catalyzes the ATP-dependent 2-thiolation of cytidine in position 32 of tRNA, to form 2-thiocytidine (s(2)C32). The sulfur atoms are provided by the cysteine/cysteine desulfurase (IscS) system. In Bordetella petrii (strain ATCC BAA-461 / DSM 12804 / CCUG 43448), this protein is tRNA-cytidine(32) 2-sulfurtransferase.